The primary structure comprises 174 residues: Photosystem I assembly protein Ycf4 (174 aa).

2 helical membrane passes run 11–31 (LSNI…FLNG) and 56–76 (IILM…CLTI).

Belongs to the Ycf4 family.

The protein localises to the plastid. It localises to the chloroplast thylakoid membrane. Functionally, seems to be required for the assembly of the photosystem I complex. This is Photosystem I assembly protein Ycf4 from Emiliania huxleyi (Coccolithophore).